A 431-amino-acid polypeptide reads, in one-letter code: 3-isopropylmalate dehydratase large subunit (431 aa).

Cysteine 300, cysteine 360, and cysteine 363 together coordinate [4Fe-4S] cluster.

It belongs to the aconitase/IPM isomerase family. LeuC type 2 subfamily. Heterodimer of LeuC and LeuD. [4Fe-4S] cluster is required as a cofactor.

The enzyme catalyses (2R,3S)-3-isopropylmalate = (2S)-2-isopropylmalate. It functions in the pathway amino-acid biosynthesis; L-leucine biosynthesis; L-leucine from 3-methyl-2-oxobutanoate: step 2/4. Functionally, catalyzes the isomerization between 2-isopropylmalate and 3-isopropylmalate, via the formation of 2-isopropylmaleate. In Sulfurihydrogenibium sp. (strain YO3AOP1), this protein is 3-isopropylmalate dehydratase large subunit.